The chain runs to 93 residues: Exodeoxyribonuclease 7 small subunit (93 aa).

The span at 61 to 75 (IDDNGDEKVYEKQTD) shows a compositional bias: basic and acidic residues. A disordered region spans residues 61-93 (IDDNGDEKVYEKQTDDPSNNGGGNRGFGSADEQ).

This sequence belongs to the XseB family. In terms of assembly, heterooligomer composed of large and small subunits.

Its subcellular location is the cytoplasm. It catalyses the reaction Exonucleolytic cleavage in either 5'- to 3'- or 3'- to 5'-direction to yield nucleoside 5'-phosphates.. Its function is as follows. Bidirectionally degrades single-stranded DNA into large acid-insoluble oligonucleotides, which are then degraded further into small acid-soluble oligonucleotides. This Limosilactobacillus reuteri (strain DSM 20016) (Lactobacillus reuteri) protein is Exodeoxyribonuclease 7 small subunit.